The following is a 289-amino-acid chain: Vesicular-fusion protein SEC17 (289 aa).

The protein belongs to the SNAP family.

It is found in the membrane. Its function is as follows. Required for vesicular transport between the endoplasmic reticulum and the Golgi apparatus. The polypeptide is Vesicular-fusion protein SEC17 (SEC17) (Coprinopsis cinerea (strain Okayama-7 / 130 / ATCC MYA-4618 / FGSC 9003) (Inky cap fungus)).